A 416-amino-acid polypeptide reads, in one-letter code: MMTIEQLGQRAKVASRALVSLTTKDKNQFLAFLAEELVAQTDMILAENAKDLAKAAEHGISEIMCDRLRLTADRIHAMAHGVRQVADLADPIGEVIKGYTNLDGLKITQKRVPLGVIAMIFESRPNVSIDAFSLAFKTNNAIILRGGKDALYSNMALVKLVRNALEASAITPDAVQLIEDTSHAVAEELMQATDYIDVLIPRGGARLIQTVKEKAKVPVIETGVGNVHIYVDEAADLEMAVKVVINAKTQRPSVCNAAESLIIHEKVGATFIPMLEAAISKVQQVEWRADEQAKALFSKAVLATEEDYAAEFLDYIMSVHLVSSLDEAISWINQYTSHHSEAIITANINAAERFQDLVDSAAVYVNASTRFTDGFVFGLGAEIGISTQKMHARGPMGLEALTSSKYLINGNGQIRS.

It belongs to the gamma-glutamyl phosphate reductase family.

It localises to the cytoplasm. The catalysed reaction is L-glutamate 5-semialdehyde + phosphate + NADP(+) = L-glutamyl 5-phosphate + NADPH + H(+). It participates in amino-acid biosynthesis; L-proline biosynthesis; L-glutamate 5-semialdehyde from L-glutamate: step 2/2. In terms of biological role, catalyzes the NADPH-dependent reduction of L-glutamate 5-phosphate into L-glutamate 5-semialdehyde and phosphate. The product spontaneously undergoes cyclization to form 1-pyrroline-5-carboxylate. This is Gamma-glutamyl phosphate reductase from Streptococcus equi subsp. zooepidemicus (strain MGCS10565).